An 83-amino-acid polypeptide reads, in one-letter code: Cytochrome b559 subunit alpha (83 aa).

Residues 21 to 35 (VIHSITIPSLFIAGW) form a helical membrane-spanning segment. His-23 contacts heme.

This sequence belongs to the PsbE/PsbF family. Heterodimer of an alpha subunit and a beta subunit. PSII is composed of 1 copy each of membrane proteins PsbA, PsbB, PsbC, PsbD, PsbE, PsbF, PsbH, PsbI, PsbJ, PsbK, PsbL, PsbM, PsbT, PsbX, PsbY, PsbZ, Psb30/Ycf12, at least 3 peripheral proteins of the oxygen-evolving complex and a large number of cofactors. It forms dimeric complexes. It depends on heme b as a cofactor.

Its subcellular location is the plastid. The protein resides in the chloroplast thylakoid membrane. In terms of biological role, this b-type cytochrome is tightly associated with the reaction center of photosystem II (PSII). PSII is a light-driven water:plastoquinone oxidoreductase that uses light energy to abstract electrons from H(2)O, generating O(2) and a proton gradient subsequently used for ATP formation. It consists of a core antenna complex that captures photons, and an electron transfer chain that converts photonic excitation into a charge separation. The chain is Cytochrome b559 subunit alpha from Psilotum nudum (Whisk fern).